A 413-amino-acid chain; its full sequence is 3-hydroxy-3-methylglutaryl-coenzyme A reductase (413 aa).

Residues glutamate 106 and aspartate 312 each act as charge relay system in the active site. Histidine 408 serves as the catalytic Proton donor.

This sequence belongs to the HMG-CoA reductase family.

It catalyses the reaction (R)-mevalonate + 2 NADP(+) + CoA = (3S)-3-hydroxy-3-methylglutaryl-CoA + 2 NADPH + 2 H(+). It participates in metabolic intermediate biosynthesis; (R)-mevalonate biosynthesis; (R)-mevalonate from acetyl-CoA: step 3/3. Converts HMG-CoA to mevalonate. This chain is 3-hydroxy-3-methylglutaryl-coenzyme A reductase (hmgA), found in Pyrococcus horikoshii (strain ATCC 700860 / DSM 12428 / JCM 9974 / NBRC 100139 / OT-3).